Reading from the N-terminus, the 510-residue chain is Hepatic triacylglycerol lipase (510 aa).

A signal peptide spans 1–21 (MGNPLQISIFLVFCIFIQSSA). Asn79 carries an N-linked (GlcNAc...) asparagine glycan. The active-site Nucleophile is the Ser169. Asp195 (charge relay system) is an active-site residue. The tract at residues 255-278 (CHFLELYKHIAEHGLNAITQTIKC) is essential for determining substrate specificity. The Charge relay system role is filled by His280. The PLAT domain maps to 353–487 (YHYQFKIQFI…HPSQEKVFVN (135 aa)). Asn398 carries N-linked (GlcNAc...) asparagine glycosylation.

It belongs to the AB hydrolase superfamily. Lipase family. Homodimer.

It is found in the secreted. It catalyses the reaction a triacylglycerol + H2O = a diacylglycerol + a fatty acid + H(+). It carries out the reaction a 1-acyl-sn-glycero-3-phosphocholine + H2O = sn-glycerol 3-phosphocholine + a fatty acid + H(+). The catalysed reaction is a 1,2-diacyl-sn-glycero-3-phosphocholine + H2O = a 2-acyl-sn-glycero-3-phosphocholine + a fatty acid + H(+). The enzyme catalyses 1,2,3-tri-(9Z-octadecenoyl)-glycerol + H2O = di-(9Z)-octadecenoylglycerol + (9Z)-octadecenoate + H(+). It catalyses the reaction 1,2-di-(9Z-octadecenoyl)-sn-glycero-3-phosphocholine + H2O = (9Z-octadecenoyl)-sn-glycero-3-phosphocholine + (9Z)-octadecenoate + H(+). It carries out the reaction 1,2,3-tributanoylglycerol + H2O = dibutanoylglycerol + butanoate + H(+). The catalysed reaction is 1,2-dihexadecanoyl-sn-glycero-3-phosphocholine + H2O = hexadecanoyl-sn-glycero-3-phosphocholine + hexadecanoate + H(+). The enzyme catalyses 1,2-di-(9Z-octadecenoyl)-sn-glycerol + H2O = 2-(9Z-octadecenoyl)-glycerol + (9Z)-octadecenoate + H(+). It catalyses the reaction 1,2,3-tri-(9Z-octadecenoyl)-glycerol + H2O = 2,3-di-(9Z)-octadecenoyl-sn-glycerol + (9Z)-octadecenoate + H(+). It carries out the reaction 1-(9Z-octadecenoyl)-sn-glycero-3-phospho-L-serine + H2O = sn-glycero-3-phospho-L-serine + (9Z)-octadecenoate + H(+). The catalysed reaction is 1-hexadecanoyl-sn-glycero-3-phosphocholine + H2O = sn-glycerol 3-phosphocholine + hexadecanoate + H(+). The enzyme catalyses 1,3-di-(9Z-octadecenoyl)-glycerol + H2O = 3-(9Z-octadecenoyl)-sn-glycerol + (9Z)-octadecenoate + H(+). Its function is as follows. Catalyzes the hydrolysis of triglycerides and phospholipids present in circulating plasma lipoproteins, including chylomicrons, intermediate density lipoproteins (IDL), low density lipoproteins (LDL) of large size and high density lipoproteins (HDL), releasing free fatty acids (FFA) and smaller lipoprotein particles. Also exhibits lysophospholipase activity. Can hydrolyze both neutral lipid and phospholipid substrates but shows a greater binding affinity for neutral lipid substrates than phospholipid substrates. In native LDL, preferentially hydrolyzes the phosphatidylcholine species containing polyunsaturated fatty acids at sn-2 position. The polypeptide is Hepatic triacylglycerol lipase (Lipc) (Mus musculus (Mouse)).